Reading from the N-terminus, the 141-residue chain is Large ribosomal subunit protein uL11 (141 aa).

This sequence belongs to the universal ribosomal protein uL11 family. Part of the ribosomal stalk of the 50S ribosomal subunit. Interacts with L10 and the large rRNA to form the base of the stalk. L10 forms an elongated spine to which L12 dimers bind in a sequential fashion forming a multimeric L10(L12)X complex. In terms of processing, one or more lysine residues are methylated.

Its function is as follows. Forms part of the ribosomal stalk which helps the ribosome interact with GTP-bound translation factors. The protein is Large ribosomal subunit protein uL11 of Petrotoga mobilis (strain DSM 10674 / SJ95).